A 280-amino-acid chain; its full sequence is Protein FAM131C (280 aa).

The disordered stretch occupies residues 195 to 280; sequence QDSLPSGPSQ…LWEEDEVFYN (86 aa). The segment covering 197–211 has biased composition (polar residues); the sequence is SLPSGPSQDDSLQAF. A compositionally biased stretch (pro residues) spans 215–227; it reads SPSPDSCPSPEEP.

This sequence belongs to the FAM131 family.

This is Protein FAM131C (FAM131C) from Homo sapiens (Human).